Here is a 396-residue protein sequence, read N- to C-terminus: Ornithine aminotransferase (396 aa).

Lysine 255 is modified (N6-(pyridoxal phosphate)lysine).

The protein belongs to the class-III pyridoxal-phosphate-dependent aminotransferase family. OAT subfamily. Pyridoxal 5'-phosphate serves as cofactor.

It localises to the cytoplasm. The enzyme catalyses a 2-oxocarboxylate + L-ornithine = L-glutamate 5-semialdehyde + an L-alpha-amino acid. It functions in the pathway amino-acid biosynthesis; L-proline biosynthesis; L-glutamate 5-semialdehyde from L-ornithine: step 1/1. Its function is as follows. Catalyzes the interconversion of ornithine to glutamate semialdehyde. The chain is Ornithine aminotransferase from Bacillus cereus (strain 03BB102).